A 357-amino-acid chain; its full sequence is Protein pelota homolog (357 aa).

The protein belongs to the eukaryotic release factor 1 family. Pelota subfamily. Monomer. Requires a divalent metal cation as cofactor.

Its subcellular location is the cytoplasm. In terms of biological role, may function in recognizing stalled ribosomes, interact with stem-loop structures in stalled mRNA molecules, and effect endonucleolytic cleavage of the mRNA. May play a role in the release non-functional ribosomes and degradation of damaged mRNAs. Has endoribonuclease activity. The polypeptide is Protein pelota homolog (Thermococcus onnurineus (strain NA1)).